A 216-amino-acid polypeptide reads, in one-letter code: Superoxide dismutase [Mn], mitochondrial (216 aa).

The transit peptide at 1 to 18 (MSFLNRNLSRTIKAAVRG) directs the protein to the mitochondrion. Positions 44, 92, 176, and 180 each coordinate Mn(2+).

This sequence belongs to the iron/manganese superoxide dismutase family. The cofactor is Mn(2+).

Its subcellular location is the mitochondrion matrix. It catalyses the reaction 2 superoxide + 2 H(+) = H2O2 + O2. Functionally, destroys superoxide anion radicals which are normally produced within the cells and which are toxic to biological systems. This is Superoxide dismutase [Mn], mitochondrial (Sod2) from Glossina morsitans morsitans (Savannah tsetse fly).